The primary structure comprises 75 residues: Ribonuclease pancreatic (75 aa).

2 disulfides stabilise this stretch: Cys-7/Cys-65 and Cys-46/Cys-53. N-linked (GlcNAc...) asparagine glycosylation occurs at Asn-15. Substrate is bound by residues 22–26 (KPVNT), Lys-47, and Arg-66.

This sequence belongs to the pancreatic ribonuclease family. Monomer. Interacts with and forms tight 1:1 complexes with RNH1. Dimerization of two such complexes may occur. Interaction with RNH1 inhibits this protein. In terms of tissue distribution, pancreas.

It is found in the secreted. The enzyme catalyses an [RNA] containing cytidine + H2O = an [RNA]-3'-cytidine-3'-phosphate + a 5'-hydroxy-ribonucleotide-3'-[RNA].. It catalyses the reaction an [RNA] containing uridine + H2O = an [RNA]-3'-uridine-3'-phosphate + a 5'-hydroxy-ribonucleotide-3'-[RNA].. Functionally, endonuclease that catalyzes the cleavage of RNA on the 3' side of pyrimidine nucleotides. Acts on single-stranded and double-stranded RNA. This Oryx leucoryx (Arabian oryx) protein is Ribonuclease pancreatic (rnase1).